The chain runs to 241 residues: Uridylate kinase (241 aa).

15–18 (KLSG) contributes to the ATP binding site. The interval 23–28 (GAEGFG) is involved in allosteric activation by GTP. Gly57 is a UMP binding site. Residues Gly58 and Arg62 each coordinate ATP. Residues Asp77 and 138–145 (TGNPFFTT) each bind UMP. 3 residues coordinate ATP: Thr165, Tyr171, and Asp174.

It belongs to the UMP kinase family. As to quaternary structure, homohexamer.

Its subcellular location is the cytoplasm. The enzyme catalyses UMP + ATP = UDP + ADP. It functions in the pathway pyrimidine metabolism; CTP biosynthesis via de novo pathway; UDP from UMP (UMPK route): step 1/1. Its activity is regulated as follows. Allosterically activated by GTP. Inhibited by UTP. Its function is as follows. Catalyzes the reversible phosphorylation of UMP to UDP. This is Uridylate kinase from Yersinia pseudotuberculosis serotype O:1b (strain IP 31758).